The primary structure comprises 186 residues: Ribosome-recycling factor (186 aa).

Positions 135–156 are disordered; sequence DANDEVKKLQKDKAVSEDEGKK.

It belongs to the RRF family.

The protein resides in the cytoplasm. Functionally, responsible for the release of ribosomes from messenger RNA at the termination of protein biosynthesis. May increase the efficiency of translation by recycling ribosomes from one round of translation to another. The polypeptide is Ribosome-recycling factor (Bdellovibrio bacteriovorus (strain ATCC 15356 / DSM 50701 / NCIMB 9529 / HD100)).